We begin with the raw amino-acid sequence, 177 residues long: Anditomin synthesis protein L (177 aa).

2 helical membrane passes run 54-74 (VVNS…PFIM) and 117-137 (IVNF…YMVF). N165 is a glycosylation site (N-linked (GlcNAc...) asparagine).

Its subcellular location is the membrane. The protein operates within secondary metabolite biosynthesis; terpenoid biosynthesis. Its function is as follows. Part of the gene cluster that mediates the biosynthesis of anditomin, a fungal meroterpenoid. The first step of the pathway is the synthesis of 3,5-dimethylorsellinic acid (DMOA) by the polyketide synthase andM. DMOA is then converted to the phthalide compound 5,7-dihydroxy-4,6-dimethylphthalide (DHDMP) by the cytochrome P450 monooxygenase andK, which is further prenylated by the prenyltransferase andD to yield farnesyl-DHDMP. Further epoxidation by the FAD-dependent monooxygenase andE leads to epoxyfarnesyl-DHDMP. The next step involves the terpene cyclase andB that converts epoxyfarnesyl-DHDMP into preandiloid A through opening of the epoxide ring followed by the cyclization of the farnesyl moiety. Preandiloid A is in turn oxidized at the C-3 hydroxyl group to yield preandiloid B by the dehydrogenase andC. The dioxygenase andA is solely responsible for the dehydrogenation of preandiloid B leading to the enone preandiloid C, as well as for the intriguing structural rearrangement to generate the bicyclo[2.2.2]octane core, transforming preandiloid C into andiconin. FAD-binding monooxygenase andJ then produces andilesin D which is reduced by dehydrogenase andI to yield andilesin A. Action of acetyltransferase andG followed by a spontaneous acetate elimination leads then to andilesin B, which is in turn substrate of the short chain dehydrogenase andH to yield andilesin C. Finally, the dioxygenase andF catalyzes the transformation of andilesin C to anditomin. The exact role of andL within the anditomin biosynthetic pathway has not been identified yet. This is Anditomin synthesis protein L from Emericella variicolor (Aspergillus stellatus).